Here is a 155-residue protein sequence, read N- to C-terminus: UPF0266 membrane protein LMHCC_1856 (155 aa).

3 consecutive transmembrane segments (helical) span residues 8–28 (IFLF…DAVI), 46–66 (RWDG…NTFF), and 70–90 (PFST…ICFF).

The protein belongs to the UPF0266 family.

Its subcellular location is the cell membrane. The polypeptide is UPF0266 membrane protein LMHCC_1856 (Listeria monocytogenes serotype 4a (strain HCC23)).